Here is a 55-residue protein sequence, read N- to C-terminus: uncharacterized protein (55 aa).

Residues 7–24 (VALVGAVLATLTACTGHI) form a helical membrane-spanning segment.

It is found in the membrane. This is an uncharacterized protein from Escherichia coli O157:H7.